Here is a 194-residue protein sequence, read N- to C-terminus: DNA replication complex GINS protein PSF3 (194 aa).

The protein belongs to the GINS3/PSF3 family. Component of the GINS complex which is a heterotetramer of SLD5, PSF1, PSF2 and PSF3.

The protein localises to the nucleus. Functions as part of the GINS complex which plays an essential role in the initiation of DNA replication by binding to DNA replication origins and facilitating the assembly of the DNA replication machinery. In Saccharomyces cerevisiae (strain ATCC 204508 / S288c) (Baker's yeast), this protein is DNA replication complex GINS protein PSF3.